We begin with the raw amino-acid sequence, 172 residues long: Large ribosomal subunit protein bL17 (172 aa).

A disordered region spans residues 153–172 (AQAAEPVAAAEPATPATTAG).

The protein belongs to the bacterial ribosomal protein bL17 family. Part of the 50S ribosomal subunit. Contacts protein L32.

The polypeptide is Large ribosomal subunit protein bL17 (Sorangium cellulosum (strain So ce56) (Polyangium cellulosum (strain So ce56))).